The primary structure comprises 65 residues: Large ribosomal subunit protein bL33c (65 aa).

It belongs to the bacterial ribosomal protein bL33 family.

The protein resides in the plastid. It localises to the chloroplast. This is Large ribosomal subunit protein bL33c from Pyropia yezoensis (Susabi-nori).